A 395-amino-acid polypeptide reads, in one-letter code: Accessory Sec system protein translocase subunit SecY2 (395 aa).

A run of 10 helical transmembrane segments spans residues Val-13–Phe-33, Ile-63–Leu-83, Leu-102–Phe-122, Gly-128–Leu-148, Val-157–Ile-177, Trp-190–Phe-210, Met-239–Gly-259, Val-272–Val-292, Leu-326–Leu-346, and Tyr-355–Ile-375.

Belongs to the SecY/SEC61-alpha family. SecY2 subfamily. Component of the accessory SecA2/SecY2 protein translocase complex required to export cell wall proteins. May form heterotrimers with SecE and SecG subunits.

The protein resides in the cell membrane. Its function is as follows. Part of the accessory SecA2/SecY2 system specifically required for export of possible cell wall proteins. The central subunit of a protein translocation channel. The polypeptide is Accessory Sec system protein translocase subunit SecY2 (Lactobacillus johnsonii (strain CNCM I-12250 / La1 / NCC 533)).